The chain runs to 617 residues: Bifunctional TH2 protein, mitochondrial (617 aa).

The transit peptide at 1-28 (MRFLFPTRLINNSSLGLLRSPHTTAPIR) directs the protein to the mitochondrion. Residue Asp-107 coordinates substrate. Cys-213 acts as the Nucleophile in catalysis. Substrate is bound by residues Tyr-217 and Tyr-244. Glu-286 functions as the Proton donor in the catalytic mechanism.

It in the N-terminal section; belongs to the TenA family. The protein in the C-terminal section; belongs to the HAD-like hydrolase superfamily.

The protein localises to the mitochondrion. It localises to the cytoplasm. The catalysed reaction is thiamine phosphate + H2O = thiamine + phosphate. The enzyme catalyses 4-amino-5-aminomethyl-2-methylpyrimidine + H2O = 4-amino-5-hydroxymethyl-2-methylpyrimidine + NH4(+). Functionally, may be involved in the salvage of thiamine breakdown products. This protein has a haloacid dehalogenase family domain fused to its TenA domain. Phosphatase with the highest activity against thiamine monophosphate (ThMP) and, with a lower activity, against thiamine diphosphate (ThDP), flavin mononucleotide, inorganic pyrophosphate, CTP and dATP. Has a thiamine salvage hydrolase activity, but only against 4-amino-5-aminomethyl-2-methylpyrimidine (amino-HMP) and not against N-formylamino-HMP, desthiothiamine, thiamine, ThMP, and ThDP. The sequence is that of Bifunctional TH2 protein, mitochondrial from Arabidopsis thaliana (Mouse-ear cress).